Consider the following 316-residue polypeptide: Transaldolase (316 aa).

K132 functions as the Schiff-base intermediate with substrate in the catalytic mechanism.

It belongs to the transaldolase family. Type 1 subfamily. Homodimer.

The protein resides in the cytoplasm. It carries out the reaction D-sedoheptulose 7-phosphate + D-glyceraldehyde 3-phosphate = D-erythrose 4-phosphate + beta-D-fructose 6-phosphate. It functions in the pathway carbohydrate degradation; pentose phosphate pathway; D-glyceraldehyde 3-phosphate and beta-D-fructose 6-phosphate from D-ribose 5-phosphate and D-xylulose 5-phosphate (non-oxidative stage): step 2/3. Transaldolase is important for the balance of metabolites in the pentose-phosphate pathway. The polypeptide is Transaldolase (Aliivibrio fischeri (strain MJ11) (Vibrio fischeri)).